The chain runs to 443 residues: UDP-N-acetylmuramate--L-alanine ligase (443 aa).

ATP is bound at residue 110–116 (GAHGKTS).

It belongs to the MurCDEF family.

The protein localises to the cytoplasm. It carries out the reaction UDP-N-acetyl-alpha-D-muramate + L-alanine + ATP = UDP-N-acetyl-alpha-D-muramoyl-L-alanine + ADP + phosphate + H(+). It functions in the pathway cell wall biogenesis; peptidoglycan biosynthesis. Cell wall formation. In Streptococcus agalactiae serotype V (strain ATCC BAA-611 / 2603 V/R), this protein is UDP-N-acetylmuramate--L-alanine ligase.